A 710-amino-acid chain; its full sequence is Polyribonucleotide nucleotidyltransferase (710 aa).

Asp-487 and Asp-493 together coordinate Mg(2+). A KH domain is found at 554–613; it reads PRIEVMNIPVDKIREVIGSGGKVIREIVEKTGAKINIEDDGTVKIASSSGKEIEAARKWI. The S1 motif domain occupies 623 to 691; that stretch reads GQIYEGTVVK…ERGKVRLSMK (69 aa).

It belongs to the polyribonucleotide nucleotidyltransferase family. The cofactor is Mg(2+).

Its subcellular location is the cytoplasm. It catalyses the reaction RNA(n+1) + phosphate = RNA(n) + a ribonucleoside 5'-diphosphate. In terms of biological role, involved in mRNA degradation. Catalyzes the phosphorolysis of single-stranded polyribonucleotides processively in the 3'- to 5'-direction. This is Polyribonucleotide nucleotidyltransferase from Rhizobium rhizogenes (strain K84 / ATCC BAA-868) (Agrobacterium radiobacter).